A 347-amino-acid polypeptide reads, in one-letter code: Molybdenum cofactor biosynthesis bifunctional protein (347 aa).

A molybdenum cofactor biosynthesis protein C region spans residues 1 to 158 (MFTHLDENQQ…EKTGGKADVS (158 aa)). Residues 75–77 (FCH) and 116–117 (ME) contribute to the substrate site. Catalysis depends on aspartate 131, which acts as the For MoaC activity. The segment at 159 to 347 (QTPLYGLVLT…NSPEDYGQIN (189 aa)) is molybdenum cofactor guanylyltransferase. GTP-binding positions include 167–169 (LTG), lysine 179, aspartate 226, and aspartate 255. Aspartate 255 contributes to the Mg(2+) binding site.

In the N-terminal section; belongs to the MoaC family. This sequence in the C-terminal section; belongs to the MobA family. The cofactor is Mg(2+).

Its subcellular location is the cytoplasm. It catalyses the reaction Mo-molybdopterin + GTP + H(+) = Mo-molybdopterin guanine dinucleotide + diphosphate. It carries out the reaction (8S)-3',8-cyclo-7,8-dihydroguanosine 5'-triphosphate = cyclic pyranopterin phosphate + diphosphate. It functions in the pathway cofactor biosynthesis; molybdopterin biosynthesis. Functionally, catalyzes the conversion of (8S)-3',8-cyclo-7,8-dihydroguanosine 5'-triphosphate to cyclic pyranopterin monophosphate (cPMP). Its function is as follows. Transfers a GMP moiety from GTP to Mo-molybdopterin (Mo-MPT) cofactor (Moco or molybdenum cofactor) to form Mo-molybdopterin guanine dinucleotide (Mo-MGD) cofactor. This chain is Molybdenum cofactor biosynthesis bifunctional protein (moaC/mobA), found in Synechocystis sp. (strain ATCC 27184 / PCC 6803 / Kazusa).